We begin with the raw amino-acid sequence, 370 residues long: Phosphate acyltransferase (370 aa).

Belongs to the PlsX family. Homodimer. Probably interacts with PlsY.

It localises to the cytoplasm. The catalysed reaction is a fatty acyl-[ACP] + phosphate = an acyl phosphate + holo-[ACP]. It functions in the pathway lipid metabolism; phospholipid metabolism. In terms of biological role, catalyzes the reversible formation of acyl-phosphate (acyl-PO(4)) from acyl-[acyl-carrier-protein] (acyl-ACP). This enzyme utilizes acyl-ACP as fatty acyl donor, but not acyl-CoA. This Polaromonas naphthalenivorans (strain CJ2) protein is Phosphate acyltransferase.